The following is a 464-amino-acid chain: GDNF family receptor alpha-2 (464 aa).

A signal peptide spans 1-21; sequence MILANVFCLFFFLDETLRSLA. 14 disulfides stabilise this stretch: Cys40-Cys93, Cys47-Cys53, Cys63-Cys78, Cys95-Cys105, Cys161-Cys222, Cys168-Cys174, Cys185-Cys200, Cys195-Cys241, Cys224-Cys229, Cys251-Cys323, Cys258-Cys264, Cys275-Cys293, Cys285-Cys347, and Cys325-Cys335. Asn52 carries N-linked (GlcNAc...) asparagine glycosylation. Residues Asn357 and Asn413 are each glycosylated (N-linked (GlcNAc...) asparagine). Residue Ser444 is the site of GPI-anchor amidated serine attachment. Residues 445–464 constitute a propeptide, removed in mature form; sequence RARPSAALTVLSVLMLKLAL.

Belongs to the GDNFR family. Interacts with NRTN ligand and RET: forms a 2:2:2 ternary complex composed of NRTN ligand, GFRA2 and RET receptor. Also forms a 4:4:4 tetrameric complex composed of 4 copies of NRTN ligand, GFRA2 and RET receptor, which prevents endocytosis of RET. Interacts with SORL1.

The protein localises to the cell membrane. Its function is as follows. Receptor for neurturin (NRTN), a growth factor that supports the survival of sympathetic neurons. NRTN-binding leads to autophosphorylation and activation of the RET receptor. Also able to mediate GDNF signaling through the RET tyrosine kinase receptor. The polypeptide is GDNF family receptor alpha-2 (GFRA2) (Pongo abelii (Sumatran orangutan)).